The primary structure comprises 162 residues: MSAKINSKKLEMFDLLKKFIDNKQNLFFLDYRGLSVSQLTDLRNKIEGEHGALKVVKNNIMKMVLKEKNINIVDSCLVGPTVVVTALEEANVIAKIFYDFVKSSTLKVKGGFVLGEFYDEAKVQAYSKLPTKKESISLLASVLKAPVSKLARTLKALADIKN.

This sequence belongs to the universal ribosomal protein uL10 family. Part of the ribosomal stalk of the 50S ribosomal subunit. The N-terminus interacts with L11 and the large rRNA to form the base of the stalk. The C-terminus forms an elongated spine to which L12 dimers bind in a sequential fashion forming a multimeric L10(L12)X complex.

Functionally, forms part of the ribosomal stalk, playing a central role in the interaction of the ribosome with GTP-bound translation factors. This is Large ribosomal subunit protein uL10 from Borrelia garinii subsp. bavariensis (strain ATCC BAA-2496 / DSM 23469 / PBi) (Borreliella bavariensis).